The sequence spans 33 residues: Cytochrome b6-f complex subunit 8 (33 aa).

Residues 2-22 (LFTVAWASLAAMFSFSIAMVV) form a helical membrane-spanning segment.

The protein belongs to the PetN family. As to quaternary structure, the 4 large subunits of the cytochrome b6-f complex are cytochrome b6, subunit IV (17 kDa polypeptide, PetD), cytochrome f and the Rieske protein, while the 4 small subunits are PetG, PetL, PetM and PetN. The complex functions as a dimer.

The protein localises to the cellular thylakoid membrane. Functionally, component of the cytochrome b6-f complex, which mediates electron transfer between photosystem II (PSII) and photosystem I (PSI), cyclic electron flow around PSI, and state transitions. The protein is Cytochrome b6-f complex subunit 8 of Synechococcus sp. (strain CC9902).